A 442-amino-acid polypeptide reads, in one-letter code: Glycoprotein endo-alpha-1,2-mannosidase-like protein (442 aa).

Residues 1–8 (MNRLRRKA) are Cytoplasmic-facing. Residues 9-29 (CVALLLFTLFIFGTMMGLRTL) traverse the membrane as a helical; Signal-anchor for type II membrane protein segment. Residues 30-442 (KPTDGFSDLA…FSKEKEQWLM (413 aa)) are Lumenal-facing.

Belongs to the glycosyl hydrolase 99 family.

The protein localises to the golgi apparatus membrane. In Danio rerio (Zebrafish), this protein is Glycoprotein endo-alpha-1,2-mannosidase-like protein (maneal).